The chain runs to 448 residues: MSFPQLGYQYIRPLYPSDRQNVGGTRSGTELSPAGTLSNVLSSVYGTPYAAAAAAQAYGAFLPYSAELPIFPQLGSQYEMKDSPGVQHAAFSHPHAAFYPYGQYQFGDPSRPKNATRESTSTLKAWLNEHRKNPYPTKGEKIMLAIITKMTLTQVSTWFANARRRLKKENKMTWAPRSRTDEEGNAYGSDHEEDKHEDDEEIDLENIDTEDIESKEDLDDPDTDIHSDSKTDARSDSEASDGFEDLNAPEDRLLKSVVGQRQVLNEEPQDKCALSSDAKASQPACEQIKLDRIPSSPPLENNIPAAHKPKIWSLAETATTPDNPRRSPNTGGSVNTQNLIAQHRLIASPGSRFQGWTGRAFSAQQLSLLNSAHFLQGLSVSHTALGSGTASFPKAAEPKHSTDSLTDRSSTVDIEKKIPVLNTAFQPVQRRSQNQLDAAMILSALSSS.

A DNA-binding region (homeobox; TALE-type) is located at residues 108-170 (DPSRPKNATR…NARRRLKKEN (63 aa)). 2 disordered regions span residues 171–250 (KMTW…NAPE) and 387–410 (SGTA…DRSS). The segment covering 195 to 222 (KHEDDEEIDLENIDTEDIESKEDLDDPD) has biased composition (acidic residues). Residues 223-237 (TDIHSDSKTDARSDS) show a composition bias toward basic and acidic residues. Residues 238-248 (EASDGFEDLNA) show a composition bias toward acidic residues. Positions 396–406 (AEPKHSTDSLT) are enriched in basic and acidic residues.

Belongs to the TALE/IRO homeobox family. As to expression, expressed in the neural plate in overlapping patterns with other irx members, which all share an anterior border of expression. Outside the nervous system and at tailbud stages, expressed in the developing otic vesicle, branchial arches, prospective heart region and pronephros.

The protein resides in the nucleus. Functionally, acts partially redundantly with other irx members in neural patterning. Required for formation of the posterior forebrain, midbrain, hindbrain, and to a lesser extent, spinal cord. Both up-regulates and down-regulates gene expression during neural development. Acts early in neural plate development to induce proneural gene expression and specify a neural precursor state. Also up-regulates repressors that prevent neuronal differentiation. Required during at least two stages of pronephros kidney development; during neurula stages, maintains transcription of key renal genes to define the size and identity of the pronephric anlage, probably in part through regulation of bmp-signaling. Subsequently required for proper formation of the intermediate tubule segment of the pronephros. This chain is Iroquois-class homeodomain protein irx-3, found in Xenopus tropicalis (Western clawed frog).